The primary structure comprises 146 residues: Hemoglobin subunit beta (146 aa).

V1 carries the post-translational modification N-acetylvaline. Residues 2–146 (HLSGEEKGAV…VATALAHKYH (145 aa)) form the Globin domain. Position 12 is a phosphothreonine (T12). The residue at position 44 (S44) is a Phosphoserine. At K59 the chain carries N6-acetyllysine. H63 serves as a coordination point for heme b. K82 carries the post-translational modification N6-acetyllysine. H92 contributes to the heme b binding site. Position 93 is an S-nitrosocysteine (C93). Residue K144 is modified to N6-acetyllysine.

The protein belongs to the globin family. Heterotetramer of two alpha chains and two beta chains. Red blood cells.

In terms of biological role, involved in oxygen transport from the lung to the various peripheral tissues. This Tadarida brasiliensis (Brazilian free-tailed bat) protein is Hemoglobin subunit beta (HBB).